The primary structure comprises 597 residues: uncharacterized protein (597 aa).

Positions Met-1–Arg-23 are enriched in basic and acidic residues. Disordered regions lie at residues Met-1–Val-32 and Arg-171–Pro-192. Residues Glu-175–Pro-186 show a composition bias toward low complexity. Phosphoserine occurs at positions 237 and 241. 2 disordered regions span residues Ser-302–Asp-335 and Glu-549–Lys-569. A compositionally biased stretch (polar residues) spans Ala-557 to Ser-568.

This is an uncharacterized protein from Rattus norvegicus (Rat).